The chain runs to 437 residues: GTPase Der (437 aa).

EngA-type G domains are found at residues 4-167 and 176-351; these read PVIA…PEDE and IRIS…ENHN. Residues 10 to 17, 57 to 61, 119 to 122, 182 to 189, 229 to 233, and 294 to 297 each bind GTP; these read GRPNVGKS, DTGGI, NKID, DTAGM, and NKWD. The KH-like domain occupies 352 to 436; it reads LRVPTHVLND…PIKIIARKKN (85 aa).

It belongs to the TRAFAC class TrmE-Era-EngA-EngB-Septin-like GTPase superfamily. EngA (Der) GTPase family. Associates with the 50S ribosomal subunit.

Its function is as follows. GTPase that plays an essential role in the late steps of ribosome biogenesis. This chain is GTPase Der, found in Halalkalibacterium halodurans (strain ATCC BAA-125 / DSM 18197 / FERM 7344 / JCM 9153 / C-125) (Bacillus halodurans).